The following is a 94-amino-acid chain: Small ribosomal subunit protein uS19 (94 aa).

It belongs to the universal ribosomal protein uS19 family.

Protein S19 forms a complex with S13 that binds strongly to the 16S ribosomal RNA. This Acetivibrio thermocellus (strain ATCC 27405 / DSM 1237 / JCM 9322 / NBRC 103400 / NCIMB 10682 / NRRL B-4536 / VPI 7372) (Clostridium thermocellum) protein is Small ribosomal subunit protein uS19.